Consider the following 423-residue polypeptide: Serine--tRNA ligase 1 (423 aa).

231-233 lines the L-serine pocket; the sequence is TAE. Residue 262–264 coordinates ATP; that stretch reads RSE. Position 285 (glutamate 285) interacts with L-serine. 349-352 contributes to the ATP binding site; sequence EISS. Serine 384 is an L-serine binding site.

Belongs to the class-II aminoacyl-tRNA synthetase family. Type-1 seryl-tRNA synthetase subfamily. Homodimer. The tRNA molecule binds across the dimer.

It is found in the cytoplasm. The catalysed reaction is tRNA(Ser) + L-serine + ATP = L-seryl-tRNA(Ser) + AMP + diphosphate + H(+). It catalyses the reaction tRNA(Sec) + L-serine + ATP = L-seryl-tRNA(Sec) + AMP + diphosphate + H(+). It participates in aminoacyl-tRNA biosynthesis; selenocysteinyl-tRNA(Sec) biosynthesis; L-seryl-tRNA(Sec) from L-serine and tRNA(Sec): step 1/1. In terms of biological role, catalyzes the attachment of serine to tRNA(Ser). Is also able to aminoacylate tRNA(Sec) with serine, to form the misacylated tRNA L-seryl-tRNA(Sec), which will be further converted into selenocysteinyl-tRNA(Sec). This chain is Serine--tRNA ligase 1, found in Enterococcus faecalis (strain ATCC 700802 / V583).